Here is a 732-residue protein sequence, read N- to C-terminus: Trehalose phosphorylase (732 aa).

The propeptide occupies Met1–Ser25.

Belongs to the glycosyltransferase group 1 family. Glycosyltransferase 4 subfamily. In terms of assembly, homodimer.

The catalysed reaction is alpha,alpha-trehalose + phosphate = alpha-D-glucose + alpha-D-glucose 1-phosphate. Its activity is regulated as follows. Activity abolished by 1 mM Cu(2+). 0.1 mM Cu(2+) reduces trehalose phosphorolysis to 76% and trehalose synthesis to 48% of maximum activity. 1 mM Zn(2+) abolishes trehalose synthesis, and reduces trehalose phosphorolysis to 40% of maximum activity. Unaffected by EDTA. Reversibly catalyzes the synthesis and degradation of trehalose from glucose and alpha-D-glucose 1-phosphate. The equilibrium lies in the direction of trehalose synthesis. This Grifola frondosa (Maitake) protein is Trehalose phosphorylase.